The sequence spans 119 residues: MYLLGHIIGWLWLMLTVAIGLSRHSVKSANRFLILSRIGYLLIIITGVALAIRTLSGNWWLTLLKVILGLGTIGLIEVAFARKQESHLNSGLVTLLVCGTLLTIICGIGLHWQLTGNLI.

A run of 4 helical transmembrane segments spans residues 1–21 (MYLLGHIIGWLWLMLTVAIGL), 32–52 (FLILSRIGYLLIIITGVALAI), 60–80 (WLTLLKVILGLGTIGLIEVAF), and 92–112 (LVTLLVCGTLLTIICGIGLHW).

Belongs to the UPF0344 family.

Its subcellular location is the cell membrane. This Lactiplantibacillus plantarum (strain ATCC BAA-793 / NCIMB 8826 / WCFS1) (Lactobacillus plantarum) protein is UPF0344 protein lp_1373.